Here is a 525-residue protein sequence, read N- to C-terminus: GMP synthase [glutamine-hydrolyzing] (525 aa).

In terms of domain architecture, Glutamine amidotransferase type-1 spans 9-207 (RILILDFGSQ…VRDICQCEAL (199 aa)). Catalysis depends on cysteine 86, which acts as the Nucleophile. Residues histidine 181 and glutamate 183 contribute to the active site. Positions 208 to 400 (WTPAKIIDDA…LGLPYDMLYR (193 aa)) constitute a GMPS ATP-PPase domain. ATP is bound at residue 235–241 (SGGVDSS).

Homodimer.

It catalyses the reaction XMP + L-glutamine + ATP + H2O = GMP + L-glutamate + AMP + diphosphate + 2 H(+). It participates in purine metabolism; GMP biosynthesis; GMP from XMP (L-Gln route): step 1/1. Functionally, catalyzes the synthesis of GMP from XMP. The protein is GMP synthase [glutamine-hydrolyzing] of Salmonella newport (strain SL254).